The chain runs to 142 residues: Ribosomal RNA large subunit methyltransferase H (142 aa).

Positions 55 and 87 each coordinate S-adenosyl-L-methionine.

The protein belongs to the RNA methyltransferase RlmH family. As to quaternary structure, homodimer.

It localises to the cytoplasm. The catalysed reaction is pseudouridine(1915) in 23S rRNA + S-adenosyl-L-methionine = N(3)-methylpseudouridine(1915) in 23S rRNA + S-adenosyl-L-homocysteine + H(+). Its function is as follows. Specifically methylates the pseudouridine at position 1915 (m3Psi1915) in 23S rRNA. The sequence is that of Ribosomal RNA large subunit methyltransferase H from Sphingopyxis alaskensis (strain DSM 13593 / LMG 18877 / RB2256) (Sphingomonas alaskensis).